Consider the following 1837-residue polypeptide: Zinc finger SWIM domain-containing protein 8 (1837 aa).

Phosphoserine occurs at positions 36, 48, and 53. Positions 45–65 are disordered; that stretch reads RKQSAGPNSPTGGGGGGGSGG. Gly residues predominate over residues 55-65; that stretch reads TGGGGGGGSGG. The SWIM-type zinc-finger motif lies at 172–208; sequence YNVAVMFDRCRVTSCSCTCGAGAKWCTHVVALCLFRI. Serine 437 is modified (phosphoserine). 3 disordered regions span residues 514–727, 803–823, and 1016–1232; these read SRPG…EEDD, NPPDLKVEPPPAKGKKNKVST, and SQTH…VPNQ. Composition is skewed to basic and acidic residues over residues 523-532 and 566-575; these read GLEESRDRPR and LSAEGGDKAL. The residue at position 567 (serine 567) is a Phosphoserine. Over residues 579-602 the composition is skewed to gly residues; that stretch reads GPGGGKAKALGGAGSGSKGSAGGG. Positions 1019-1040 are enriched in polar residues; that stretch reads HKPQTLSSFYSSSRPTTASQRS. Over residues 1119-1130 the composition is skewed to gly residues; the sequence is SRGGYNGRGWGS. A Phosphothreonine modification is found at threonine 1139. Residues 1144 to 1159 show a composition bias toward polar residues; it reads IDSSAPETTSDSSPTL. 3 positions are modified to phosphoserine: serine 1153, serine 1156, and serine 1160. Low complexity predominate over residues 1174-1209; the sequence is GRGQDSDSISSSSSDSLGSSSSSGSRRASASGGARA. A compositionally biased stretch (basic and acidic residues) spans 1210–1226; sequence KTVEVGRYKGRRPESHA. Residue serine 1267 is modified to Phosphoserine. Disordered regions lie at residues 1442–1464 and 1635–1656; these read SASGIRAGGEAGRGMPEGRGGPG and QPSPLVSGGFPPPEEETHSQPV. Over residues 1447 to 1464 the composition is skewed to gly residues; it reads RAGGEAGRGMPEGRGGPG. Serine 1836 carries the post-translational modification Phosphoserine.

It belongs to the ZSWIM8 family. In terms of assembly, component of the SCF-like E3 ubiquitin-protein ligase complex which contains CUL3, RBX1, ELOB, ELOC and ZSWIM8. (Microbial infection) Interacts with Zika virus protein NS5; this interaction allows STAT2 binding and subsequent proteasomal degradation.

It is found in the cytoplasm. The protein localises to the cytosol. Its pathway is protein modification; protein ubiquitination. Substrate recognition component of a SCF-like E3 ubiquitin-protein ligase complex that promotes target-directed microRNA degradation (TDMD), a process that mediates degradation of microRNAs (miRNAs). The SCF-like E3 ubiquitin-protein ligase complex acts by catalyzing ubiquitination and subsequent degradation of AGO proteins (AGO1, AGO2, AGO3 and/or AGO4), thereby exposing miRNAs for degradation. Specifically recognizes and binds AGO proteins when they are engaged with a TDMD target. May also act as a regulator of axon guidance: specifically recognizes misfolded ROBO3 and promotes its ubiquitination and subsequent degradation. Plays an essential role for proper embryonic development of heart and lung. Controls protein quality of DAB1, a key signal molecule for brain development, thus protecting its signaling strength. Mechanistically, recognizes intrinsically disordered regions of DAB1 and eliminates misfolded DAB1 that cannot be properly phosphorylated. In terms of biological role, (Microbial infection) Participates in Zika virus inhibition of IFN signaling by acting as a scaffold protein to connect ZSWIM8/CUL3 ligase complex and STAT2, leading to STAT2 degradation. This Homo sapiens (Human) protein is Zinc finger SWIM domain-containing protein 8.